A 1405-amino-acid polypeptide reads, in one-letter code: DNA-directed RNA polymerase subunit beta' (1405 aa).

Zn(2+)-binding residues include cysteine 71, cysteine 73, cysteine 86, and cysteine 89. Aspartate 462, aspartate 464, and aspartate 466 together coordinate Mg(2+). The Zn(2+) site is built by cysteine 810, cysteine 884, cysteine 891, and cysteine 894.

It belongs to the RNA polymerase beta' chain family. In terms of assembly, the RNAP catalytic core consists of 2 alpha, 1 beta, 1 beta' and 1 omega subunit. When a sigma factor is associated with the core the holoenzyme is formed, which can initiate transcription. It depends on Mg(2+) as a cofactor. Requires Zn(2+) as cofactor.

The catalysed reaction is RNA(n) + a ribonucleoside 5'-triphosphate = RNA(n+1) + diphosphate. Its function is as follows. DNA-dependent RNA polymerase catalyzes the transcription of DNA into RNA using the four ribonucleoside triphosphates as substrates. The protein is DNA-directed RNA polymerase subunit beta' of Maricaulis maris (strain MCS10) (Caulobacter maris).